Consider the following 579-residue polypeptide: Fatty-acid amide hydrolase 1 (579 aa).

A helical membrane pass occupies residues 9–29 (AFSGPSGVALACCLVAAALAL). Over 30–403 (RWSSRRMARG…GDYVDSCLGD (374 aa)) the chain is Cytoplasmic. The Charge relay system role is filled by Lys142. Substrate-binding positions include Met191, Ser217, and 238–241 (IGGS). The active-site Charge relay system is Ser217. Residue Ser241 is the Acyl-ester intermediate of the active site. Ser241 bears the Phosphoserine mark. Residues 404–433 (LISILRLPKWLKGLLAFMLRPLLPRLAGFL) lie within the membrane without spanning it. At 434–579 (SSLRPRSAGK…RLMAPGRQPS (146 aa)) the chain is on the cytoplasmic side.

Belongs to the amidase family. In terms of assembly, homodimer.

The protein resides in the endoplasmic reticulum membrane. The protein localises to the golgi apparatus membrane. The catalysed reaction is N-(5Z,8Z,11Z,14Z-eicosatetraenoyl)-ethanolamine + H2O = ethanolamine + (5Z,8Z,11Z,14Z)-eicosatetraenoate. The enzyme catalyses (9Z)-octadecenamide + H2O = (9Z)-octadecenoate + NH4(+). It catalyses the reaction 2-(5Z,8Z,11Z,14Z-eicosatetraenoyl)-glycerol + H2O = glycerol + (5Z,8Z,11Z,14Z)-eicosatetraenoate + H(+). It carries out the reaction 1-O-methyl-(5Z,8Z,11Z,14Z)-eicosatetraenoate + H2O = methanol + (5Z,8Z,11Z,14Z)-eicosatetraenoate + H(+). The catalysed reaction is (9Z,12Z,15Z)-octadecatrienamide + H2O = (9Z,12Z,15Z)-octadecatrienoate + NH4(+). The enzyme catalyses (5Z,8Z,11Z,14Z)-eicosatetraenamide + H2O = (5Z,8Z,11Z,14Z)-eicosatetraenoate + NH4(+). It catalyses the reaction (6Z)-octadecenamide + H2O = (6Z)-octadecenoate + NH4(+). It carries out the reaction (15Z)-tetracosenamide + H2O = (15Z)-tetracosenoate + NH4(+). The catalysed reaction is (8Z,11Z,14Z)-eicosatrienamide + H2O = (8Z,11Z,14Z)-eicosatrienoate + NH4(+). The enzyme catalyses (11Z,14Z,17Z)-eicosatrienamide + H2O = (11Z,14Z,17Z)-eicosatrienoate + NH4(+). It catalyses the reaction (11Z,14Z)-eicosadienamide + H2O = (11Z,14Z)-eicosadienoate + NH4(+). It carries out the reaction (9Z,12Z)-octadecadienamide + H2O = (9Z,12Z)-octadecadienoate + NH4(+). The catalysed reaction is tetradecamide + H2O = tetradecanoate + NH4(+). The enzyme catalyses N-(9Z-octadecenoyl) ethanolamine + H2O = ethanolamine + (9Z)-octadecenoate. It catalyses the reaction N-(9Z-octadecenoyl)-taurine + H2O = taurine + (9Z)-octadecenoate. It carries out the reaction (11Z)-eicosenamide + H2O = (11Z)-eicosenoate + NH4(+). The catalysed reaction is N-(9Z-hexadecenoyl) ethanolamine + H2O = (9Z)-hexadecenoate + ethanolamine. The enzyme catalyses N-octadecanoyl ethanolamine + H2O = octadecanoate + ethanolamine. It catalyses the reaction N-docosanoyl-ethanolamine + H2O = docosanoate + ethanolamine. It carries out the reaction N-tetracosanoyl-taurine + H2O = tetracosanoate + taurine. The catalysed reaction is N-(15Z-tetracosenoyl)-ethanolamine + H2O = (15Z)-tetracosenoate + ethanolamine. The enzyme catalyses N-docosanoyl-taurine + H2O = docosanoate + taurine. It catalyses the reaction N-(15Z-tetracosenoyl)-taurine + H2O = (15Z)-tetracosenoate + taurine. It carries out the reaction N-tricosanoyl-taurine + H2O = tricosanoate + taurine. The catalysed reaction is (9Z)-octadecenoate + glycine = N-(9Z-octadecenoyl)glycine + H2O. The enzyme catalyses N-(5Z,8Z,11Z,14Z)-eicosatetraenoyl-glycine + H2O = (5Z,8Z,11Z,14Z)-eicosatetraenoate + glycine. It catalyses the reaction N-(5Z,8Z,11Z,14Z-eicosatetraenoyl)-L-serine + H2O = (5Z,8Z,11Z,14Z)-eicosatetraenoate + L-serine. Inhibited by trifluoromethyl ketone. In terms of biological role, catalyzes the hydrolysis of endogenous amidated lipids like the sleep-inducing lipid oleamide ((9Z)-octadecenamide), the endocannabinoid anandamide (N-(5Z,8Z,11Z,14Z-eicosatetraenoyl)-ethanolamine), as well as other fatty amides, to their corresponding fatty acids, thereby regulating the signaling functions of these molecules. Also catalyzes the hydrolysis of the endocannabinoid 2-arachidonoylglycerol (2-(5Z,8Z,11Z,14Z-eicosatetraenoyl)-glycerol). FAAH cooperates with PM20D1 in the hydrolysis of amino acid-conjugated fatty acids such as N-fatty acyl glycine and N-fatty acyl-L-serine, thereby acting as a physiological regulator of specific subsets of intracellular, but not of extracellular, N-fatty acyl amino acids. The polypeptide is Fatty-acid amide hydrolase 1 (FAAH) (Sus scrofa (Pig)).